A 246-amino-acid polypeptide reads, in one-letter code: Orotidine 5'-phosphate decarboxylase (246 aa).

Residues Asp22, Lys44, 71 to 80, Thr131, Arg192, Gln201, Gly221, and Arg222 each bind substrate; that span reads DLKFHDIPNT. Lys73 acts as the Proton donor in catalysis.

Belongs to the OMP decarboxylase family. Type 1 subfamily. In terms of assembly, homodimer.

The enzyme catalyses orotidine 5'-phosphate + H(+) = UMP + CO2. Its pathway is pyrimidine metabolism; UMP biosynthesis via de novo pathway; UMP from orotate: step 2/2. Catalyzes the decarboxylation of orotidine 5'-monophosphate (OMP) to uridine 5'-monophosphate (UMP). The chain is Orotidine 5'-phosphate decarboxylase from Enterobacter sp. (strain 638).